A 1192-amino-acid chain; its full sequence is Protein FAM83H (1192 aa).

Disordered regions lie at residues 435–542, 557–661, 695–720, 737–1082, and 1094–1145; these read EGMG…VKQG, DGGE…LAEP, SKLE…ESEP, LSRE…SNII, and ILEQ…ERDN. Residues 437–447 show a composition bias toward basic and acidic residues; sequence MGHDDRGHYDR. 2 stretches are compositionally biased toward polar residues: residues 523 to 538 and 629 to 652; these read QLFS…QDPS and SDLG…ASST. 2 stretches are compositionally biased toward basic and acidic residues: residues 737–759 and 768–789; these read LSRE…KHAS and DTKE…EENK. The segment covering 790–810 has biased composition (polar residues); the sequence is VTQPTVPSASQQITSSLNMND. A compositionally biased stretch (basic and acidic residues) spans 820-834; it reads DQQEKRKTSKLELDL. Residues 861–878 show a composition bias toward polar residues; it reads TSEQSTVKAQEPTVSQTD. 2 stretches are compositionally biased toward basic and acidic residues: residues 880–892 and 914–925; these read VPHR…KPKP and APKKEPVKEPTK. The segment covering 926 to 946 has biased composition (low complexity); that stretch reads SLKPFPSPKFLKPFKSSQSSS. Residues 994–1005 are compositionally biased toward basic and acidic residues; the sequence is ESKDTKALDFLK. Residues 1068-1082 are compositionally biased toward polar residues; sequence KPTTSRYQSSTSNII. Residues 1107-1122 show a composition bias toward basic and acidic residues; that stretch reads QQNEESGKGDGGKDDV.

This sequence belongs to the FAM83 family.

Its subcellular location is the cytoplasm. It is found in the cytoskeleton. May play a role in keratin cytoskeleton disassembly. The sequence is that of Protein FAM83H from Danio rerio (Zebrafish).